The primary structure comprises 350 residues: MTVIDVLPQTQRALKIVGPNAVSVNAAAPLPDIEPTDVLVRVVCVSINPVDGKAADMSPQLGATSGTDFSGVVVALGADVEADNWREANTMKPVRIGDRVFGGIFGNDPLRPHNGAFADYVAVPARLVWHIPTGTDFATAATMGAAIATVGLSLFNYLGLPLPSKSKAGLPVVTTCSAASSTNVLQLGAEAWFDYKSPTCGADIREHTNDSLAFALDCITDTASMGICYEALGSAGGRYVALDAFPVRGHTRRSVVPEWVCTPTQFGKAIRWTPPYDLEPRPYDLKCAELWYVVAQRLIDEGLIASHPLEKRNGGLSAVPEGMEEVRRGQIKGKKLVYTILDSEPIAVSA.

50–53 (VDGK) contributes to the NADP(+) binding site. 145–152 (AAIATVGL) is a substrate binding site. NADP(+) is bound by residues 177-180 (SAAS), Y195, and 242-243 (LD). 262-266 (TPTQF) lines the substrate pocket. An NADP(+)-binding site is contributed by 331–332 (IK).

This sequence belongs to the zinc-containing alcohol dehydrogenase family. In terms of assembly, monomer.

It catalyses the reaction N-[(4E,6E,10S,12Z,14E)-6,10-dimethyl-3-oxohexadeca-4,6,12,14-tetraenoyl]-L-tyrosyl-[ACP] = (3E,5S)-3-[(2E,4E,8S,10E,12Z)-1-hydroxy-4,8-dimethyltetradeca-2,4,10,12-tetraen-1-ylidene]-5-[(4-hydroxyphenyl)methyl]pyrrolidine-2,4-dione + holo-[ACP] + H(+). It participates in mycotoxin biosynthesis. Its function is as follows. Trans-enoyl reductase; part of the gene cluster that mediates the biosynthesis of ilicicolin H, a 4-hydroxy-2-pyridonealkaloid that has potent and broad antifungal activities by inhibiting the mitochondrial respiration chain. IliB collaborates with the hybrid PKS-NRPS synthetase iliA to assemble the backbone of ilicicolin H. The PKS portion of iliA and trans-acting enoyl reductase iliB work together to construct an octaketide, and two methyl groups are introduced by the MT domain of iliA during the chain assembly. The nascent chain is then condensed with tyrosine, catalyzed by the iliA C domain, and the resulting PKS-NRPS hybrid is offloaded by the iliA RED domain to form an advanced tetramic acid intermediate. The biosynthesis of ilicicolin H starts with formation of the tetramic acid by the hybrid PKS-NRPS synthetase iliA with the partnering trans-enoyl reductase iliB since iliA lacks a designated enoylreductase (ER) domain. The cytochrome P450 monooxygenase iliC then catalyzes the ring expansion of the tetramate to the acyclic 2-pyridone. The pericyclase iliD further converts the acyclic 2-pyridone into 8-epi-ilicicolin H. 8-epi-ilicicolin H might then spontaneously convert to ilicicolin H since ilicicolin H is produced in the absence of the epimerase iliE, in contrast to what was observed for the Talaromyces variabilis ilicolin H biosynthetic pathway. This is Trans-enoyl reductase iliB from Hypocrea jecorina (strain QM6a) (Trichoderma reesei).